Reading from the N-terminus, the 212-residue chain is FMN-dependent NADH:quinone oxidoreductase (212 aa).

Residues S10, 16 to 18, and 98 to 101 contribute to the FMN site; these read SFS and MWNF.

It belongs to the azoreductase type 1 family. Homodimer. The cofactor is FMN.

It carries out the reaction 2 a quinone + NADH + H(+) = 2 a 1,4-benzosemiquinone + NAD(+). It catalyses the reaction N,N-dimethyl-1,4-phenylenediamine + anthranilate + 2 NAD(+) = 2-(4-dimethylaminophenyl)diazenylbenzoate + 2 NADH + 2 H(+). In terms of biological role, quinone reductase that provides resistance to thiol-specific stress caused by electrophilic quinones. Its function is as follows. Also exhibits azoreductase activity. Catalyzes the reductive cleavage of the azo bond in aromatic azo compounds to the corresponding amines. This chain is FMN-dependent NADH:quinone oxidoreductase, found in Desulfotalea psychrophila (strain LSv54 / DSM 12343).